The chain runs to 678 residues: Growth arrest-specific protein 6 (678 aa).

Positions 1 to 30 (MAPSLSPGPAALRRAPQLLLLLLAAECALA) are cleaved as a signal peptide. The 42-residue stretch at 53-94 (FEEAKQGHLERECVEELCSREEAREVFENDPETDYFYPRYLD) folds into the Gla domain. A disulfide bridge connects residues C65 and C70. S71 carries the phosphoserine; by FAM20C modification. One can recognise an EGF-like 1; calcium-binding domain in the interval 116–154 (LPDQCTPNPCDRKGTQACQDLMGNFFCLCKAGWGGRLCD). 14 disulfide bridges follow: C120/C133, C125/C142, C144/C153, C160/C171, C167/C180, C182/C195, C201/C212, C207/C221, C223/C236, C242/C251, C247/C260, C262/C277, C283/C570, and C444/C470. Residues 156-196 (DVNECSQENGGCLQICHNKPGSFHCSCHSGFELSSDGRTCQ) enclose the EGF-like 2; calcium-binding domain. Residues 197 to 237 (DIDECADSEACGEARCKNLPGSYSCLCDEGFAYSSQEKACR) enclose the EGF-like 3; calcium-binding domain. The region spanning 238–278 (DVDECLQGRCEQVCVNSPGSYTCHCDGRGGLKLSQDMDTCE) is the EGF-like 4; calcium-binding domain. 2 Laminin G-like domains span residues 298–470 (GRMF…RMQC) and 477–670 (GSFY…AHSC). Ca(2+)-binding residues include D329 and E331. Residue N420 is glycosylated (N-linked (GlcNAc...) asparagine). R440 serves as a coordination point for Ca(2+). 2 positions are modified to phosphothreonine: T621 and T637. Position 640 is a phosphotyrosine (Y640). The cysteines at positions 643 and 670 are disulfide-linked. D656 is a Ca(2+) binding site.

Heterodimer and heterotetramer with AXL. Post-translationally, proteolytically processed after secretion to yield a N-terminal 36 kDa protein and a C-terminal 50 kDa protein including the laminin G-like domains which activates AXL. In terms of processing, gamma-carboxyglutamate residues are formed by vitamin K dependent carboxylation. These residues are essential for the binding of calcium. Plasma. Isoform 1 and isoform 2 are widely expressed, isoform 1 being expressed at higher levels than isoform 2 in most tissues. Isoform 2 is the predominant form in spleen.

It is found in the secreted. In terms of biological role, ligand for tyrosine-protein kinase receptors AXL, TYRO3 and MER whose signaling is implicated in cell growth and survival, cell adhesion and cell migration. GAS6/AXL signaling plays a role in various processes such as endothelial cell survival during acidification by preventing apoptosis, optimal cytokine signaling during human natural killer cell development, hepatic regeneration, gonadotropin-releasing hormone neuron survival and migration, platelet activation, or regulation of thrombotic responses. Its function is as follows. (Microbial infection) Can bridge virus envelope phosphatidylserine to the TAM receptor tyrosine kinase Axl to mediate viral entry by apoptotic mimicry. Plays a role in Dengue cell entry by apoptotic mimicry. Plays a role in Vaccinia virus cell entry by apoptotic mimicry. Plays a role in ebolavirus and marburgvirus cell entry by apoptotic mimicry. The protein is Growth arrest-specific protein 6 of Homo sapiens (Human).